A 185-amino-acid polypeptide reads, in one-letter code: Peptide deformylase (185 aa).

C112 and H155 together coordinate Fe cation. E156 is an active-site residue. Position 159 (H159) interacts with Fe cation.

Belongs to the polypeptide deformylase family. The cofactor is Fe(2+).

The enzyme catalyses N-terminal N-formyl-L-methionyl-[peptide] + H2O = N-terminal L-methionyl-[peptide] + formate. In terms of biological role, removes the formyl group from the N-terminal Met of newly synthesized proteins. Requires at least a dipeptide for an efficient rate of reaction. N-terminal L-methionine is a prerequisite for activity but the enzyme has broad specificity at other positions. The chain is Peptide deformylase from Latilactobacillus sakei subsp. sakei (strain 23K) (Lactobacillus sakei subsp. sakei).